The following is a 366-amino-acid chain: L-tyrosine C(3)-methyltransferase (366 aa).

Residues 1–12 (MTISLENTTVGQ) show a composition bias toward polar residues. The interval 1 to 22 (MTISLENTTVGQNPAGGPPTGK) is disordered. Residue Glu223 participates in S-adenosyl-L-methionine binding.

The protein belongs to the class I-like SAM-binding methyltransferase superfamily. Cation-independent O-methyltransferase family.

It catalyses the reaction L-tyrosine + S-adenosyl-L-methionine = 3-methyl-L-tyrosine + S-adenosyl-L-homocysteine + H(+). Its pathway is antibiotic biosynthesis. C-methyltransferase that mediates the methylation of tyrosine into 3-methyl-L-tyrosine (3-Me-Tyr) in biosynthesis of saframycin A, a potent antitumor antibiotic that belongs to the tetrahydroisoquinoline family. Involved in biosynthesis of 3-hydroxy-5-methyl-O-methyltyrosine (3-OH-5-Me-OMe-Tyr), a core structure of saframycin A. The polypeptide is L-tyrosine C(3)-methyltransferase (Streptomyces lavendulae).